The chain runs to 76 residues: Omega-conotoxin-like TxO1 (76 aa).

The N-terminal stretch at 1 to 22 (MKLTCVVIVAVLFLTVWTFATA) is a signal peptide. The propeptide occupies 23 to 50 (DDSGNGLEKLFSNAHHEMKNPEASKLNE). 3 disulfides stabilise this stretch: Cys-52-Cys-67, Cys-59-Cys-70, and Cys-66-Cys-75.

This sequence belongs to the conotoxin O1 superfamily. In terms of tissue distribution, expressed by the venom duct.

It is found in the secreted. Functionally, omega-conotoxins act at presynaptic membranes, they bind and block voltage-gated calcium channels (Cav). This is Omega-conotoxin-like TxO1 from Conus textile (Cloth-of-gold cone).